A 248-amino-acid polypeptide reads, in one-letter code: UPF0246 protein FN1762 (248 aa).

Belongs to the UPF0246 family.

In Fusobacterium nucleatum subsp. nucleatum (strain ATCC 25586 / DSM 15643 / BCRC 10681 / CIP 101130 / JCM 8532 / KCTC 2640 / LMG 13131 / VPI 4355), this protein is UPF0246 protein FN1762.